The primary structure comprises 577 residues: Adenine deaminase (577 aa).

This sequence belongs to the metallo-dependent hydrolases superfamily. Adenine deaminase family. It depends on Mn(2+) as a cofactor.

It carries out the reaction adenine + H2O + H(+) = hypoxanthine + NH4(+). This chain is Adenine deaminase, found in Kosmotoga olearia (strain ATCC BAA-1733 / DSM 21960 / TBF 19.5.1).